The sequence spans 407 residues: Tryptophan synthase beta chain (407 aa).

The span at 1 to 11 (MSTAPSQQHAS) shows a compositional bias: polar residues. A disordered region spans residues 1 to 25 (MSTAPSQQHASAQVPDPRGRFGDFG). N6-(pyridoxal phosphate)lysine is present on Lys-100.

Belongs to the TrpB family. As to quaternary structure, tetramer of two alpha and two beta chains. Pyridoxal 5'-phosphate is required as a cofactor.

It carries out the reaction (1S,2R)-1-C-(indol-3-yl)glycerol 3-phosphate + L-serine = D-glyceraldehyde 3-phosphate + L-tryptophan + H2O. It participates in amino-acid biosynthesis; L-tryptophan biosynthesis; L-tryptophan from chorismate: step 5/5. Its function is as follows. The beta subunit is responsible for the synthesis of L-tryptophan from indole and L-serine. The protein is Tryptophan synthase beta chain of Rhodopirellula baltica (strain DSM 10527 / NCIMB 13988 / SH1).